Here is a 287-residue protein sequence, read N- to C-terminus: Putative ABC transporter ATP-binding protein MM_1038 (287 aa).

The region spanning 5–238 (LENISVFYSR…ENVPLPPVAS (234 aa)) is the ABC transporter domain. 40–47 (GEKGAGKS) contacts ATP.

The protein belongs to the ABC transporter superfamily.

The protein resides in the cell membrane. In terms of biological role, probably part of an ABC transporter complex. Responsible for energy coupling to the transport system. The sequence is that of Putative ABC transporter ATP-binding protein MM_1038 from Methanosarcina mazei (strain ATCC BAA-159 / DSM 3647 / Goe1 / Go1 / JCM 11833 / OCM 88) (Methanosarcina frisia).